Here is a 485-residue protein sequence, read N- to C-terminus: MKTMLAAPTASSNGRPIGPHKSWKKVNEERKALKRQRKQDKLLKELQQAKEAESQAGKAANEVQAKDKPNPSTLSIAVPGSILENAQSNELRAYVAGQIARAACIFRVNEVIVFDDVGIATARETKRSYEADGEGSSTGTVRSSSLQLARILQYLECPQYLRKYFFPLHKDLKYSGLLNPLDTPHHLRQQSKFRYREGVICDKKAKEGHSYANVGLLNDVLVDKAIEPGVRVTVKMEPQSESCRKQRGTLVSPDEPRRETGVYWGYQVRIAHSMSEIFTKSPYATGYDVTVGTSDRGTNVHEVPNRSYNFNHMLIVFGGLQGLESALANDEKLTVDDPELLFDHYVNVLPRQGSRTIRTEEALLIALAALQEKLQPQVADVEIDLTDLLPKSEDSGIAVRRDVLVSKKQKKRKQVEDTPDETVVDEPSFSKPLPKVARLTANPFADSSEELAKNTPAQDDFEVVSSTTVSGTSHSCADDDLSRFD.

S-adenosyl-L-methionine is bound by residues Arg296, Gly318, and Asn347.

It belongs to the class IV-like SAM-binding methyltransferase superfamily.

It localises to the nucleus. It carries out the reaction uridine in 28S rRNA + S-adenosyl-L-methionine = N(3)-methyluridine in 28S rRNA + S-adenosyl-L-homocysteine + H(+). In terms of biological role, S-adenosyl-L-methionine-dependent methyltransferase that specifically methylates the uridine in position 3485 of 28S rRNA. The sequence is that of 28S rRNA (uridine-N(3))-methyltransferase from Drosophila melanogaster (Fruit fly).